A 206-amino-acid polypeptide reads, in one-letter code: MTSLIMDMNRLNLDKLKHENIFSDNIIEDAKEFIFGSRKIYTDSVDDLIELYSLAKYLNNQTLKDVVIERMDYVCKYIGKDNWSTIYSFYKENGLRNSFLRQYINNNIEEICSTDQFLKLDVDSVCDILDNDEIVVTREYTILNMVLRWLENKRVNIDDFTKVMFVIRFKFITYSELTNAIEKIAPEYRQRLQDLYHKKLRVLDIL.

One can recognise a BACK domain in the interval 99–181 (FLRQYINNNI…ITYSELTNAI (83 aa)).

The protein belongs to the orthopoxvirus OPG030 family.

The polypeptide is Protein OPG030 (OPG030) (Cynomys gunnisoni (Gunnison's prairie dog)).